The chain runs to 176 residues: MKFLFDLFPIILFFAAFKLWGIFTATAVAIAATLAQVAWVAFRHRKVDTMLWVSLGVIVVFGGATLVLHDEKFIQWKPTVLYWLFAVGLVAARYAFGKNLIEKMMGKQLTLPEPVWDKLNLAWAAFFAALGVTNLYVVRNFTESQWVNFKLFGTTGAIVVFVILQSLWLAKYLKEE.

Transmembrane regions (helical) follow at residues phenylalanine 3–phenylalanine 23, threonine 49–histidine 69, lysine 72–alanine 92, lysine 118–valine 138, and phenylalanine 149–leucine 169.

It belongs to the YciB family.

It is found in the cell inner membrane. Functionally, plays a role in cell envelope biogenesis, maintenance of cell envelope integrity and membrane homeostasis. This Burkholderia mallei (strain NCTC 10247) protein is Inner membrane-spanning protein YciB.